The primary structure comprises 430 residues: Serine hydroxymethyltransferase (430 aa).

120–122 lines the (6S)-5,6,7,8-tetrahydrofolate pocket; sequence GHI. An N6-(pyridoxal phosphate)lysine modification is found at Lys226.

The protein belongs to the SHMT family. As to quaternary structure, homodimer. The cofactor is pyridoxal 5'-phosphate.

It is found in the cytoplasm. The protein operates within amino-acid biosynthesis; glycine biosynthesis; glycine from L-serine: step 1/1. Catalyzes the reversible interconversion of serine and glycine with a modified folate serving as the one-carbon carrier. Also exhibits a pteridine-independent aldolase activity toward beta-hydroxyamino acids, producing glycine and aldehydes, via a retro-aldol mechanism. This is Serine hydroxymethyltransferase from Pyrobaculum neutrophilum (strain DSM 2338 / JCM 9278 / NBRC 100436 / V24Sta) (Thermoproteus neutrophilus).